We begin with the raw amino-acid sequence, 361 residues long: Fructose-1,6-bisphosphatase class 1 2 (361 aa).

E110, D134, L136, and D137 together coordinate Mg(2+). Substrate-binding positions include 137-140 (DGSS), N231, Y264, and K294. E300 is a binding site for Mg(2+).

It belongs to the FBPase class 1 family. In terms of assembly, homotetramer. Requires Mg(2+) as cofactor.

It is found in the cytoplasm. It catalyses the reaction beta-D-fructose 1,6-bisphosphate + H2O = beta-D-fructose 6-phosphate + phosphate. The protein operates within carbohydrate biosynthesis; gluconeogenesis. This chain is Fructose-1,6-bisphosphatase class 1 2, found in Salinibacter ruber (strain DSM 13855 / M31).